Consider the following 353-residue polypeptide: D-alanine--D-alanine ligase (353 aa).

Residues Lys-141–Asp-349 enclose the ATP-grasp domain. Glu-176–Glu-231 contributes to the ATP binding site. Mg(2+)-binding residues include Asp-302, Glu-316, and Asn-318.

This sequence belongs to the D-alanine--D-alanine ligase family. Mg(2+) serves as cofactor. Requires Mn(2+) as cofactor.

It is found in the cytoplasm. It carries out the reaction 2 D-alanine + ATP = D-alanyl-D-alanine + ADP + phosphate + H(+). Its pathway is cell wall biogenesis; peptidoglycan biosynthesis. Functionally, cell wall formation. The chain is D-alanine--D-alanine ligase from Synechococcus sp. (strain WH7803).